Reading from the N-terminus, the 436-residue chain is Trigger factor (436 aa).

The PPIase FKBP-type domain occupies 161-246 (GMRVTMDFVG…LNKVEEQILP (86 aa)).

Belongs to the FKBP-type PPIase family. Tig subfamily.

It localises to the cytoplasm. The enzyme catalyses [protein]-peptidylproline (omega=180) = [protein]-peptidylproline (omega=0). Functionally, involved in protein export. Acts as a chaperone by maintaining the newly synthesized protein in an open conformation. Functions as a peptidyl-prolyl cis-trans isomerase. The chain is Trigger factor from Aeromonas hydrophila subsp. hydrophila (strain ATCC 7966 / DSM 30187 / BCRC 13018 / CCUG 14551 / JCM 1027 / KCTC 2358 / NCIMB 9240 / NCTC 8049).